The primary structure comprises 394 residues: Succinate--CoA ligase [ADP-forming] subunit beta (394 aa).

In terms of domain architecture, ATP-grasp spans 9–243 (KDILAGFGIA…YSQLNPLEIA (235 aa)). Residues Lys-45, 52–54 (GRG), Glu-98, Val-101, and Glu-106 each bind ATP. Residues Asn-198 and Asp-212 each coordinate Mg(2+). Substrate is bound by residues Asn-263 and 320-322 (GIM).

The protein belongs to the succinate/malate CoA ligase beta subunit family. Heterotetramer of two alpha and two beta subunits. It depends on Mg(2+) as a cofactor.

The enzyme catalyses succinate + ATP + CoA = succinyl-CoA + ADP + phosphate. It catalyses the reaction GTP + succinate + CoA = succinyl-CoA + GDP + phosphate. The protein operates within carbohydrate metabolism; tricarboxylic acid cycle; succinate from succinyl-CoA (ligase route): step 1/1. In terms of biological role, succinyl-CoA synthetase functions in the citric acid cycle (TCA), coupling the hydrolysis of succinyl-CoA to the synthesis of either ATP or GTP and thus represents the only step of substrate-level phosphorylation in the TCA. The beta subunit provides nucleotide specificity of the enzyme and binds the substrate succinate, while the binding sites for coenzyme A and phosphate are found in the alpha subunit. The chain is Succinate--CoA ligase [ADP-forming] subunit beta from Pelobacter propionicus (strain DSM 2379 / NBRC 103807 / OttBd1).